The chain runs to 397 residues: Protein Brevis radix-like 1 (397 aa).

Disordered regions lie at residues 14 to 37 (GAPPLREQSDDADDAAVARGAGEC) and 105 to 148 (RAGS…EDDE). Residues 124–148 (AGDEEEEEEEEEEEGTTADGSEDDE) show a composition bias toward acidic residues. Positions 150 to 205 (KEWVAQVEPGVLITFLSLPEGGNDLKRIRFSREIFNKWQAQRWWAENYEKVMELYN) constitute a BRX 1 domain. Disordered stretches follow at residues 212-278 (QTPL…QQHH) and 300-342 (SISG…DQER). Residues 220 to 230 (KSEDESLKEDI) are compositionally biased toward basic and acidic residues. Residues 309-320 (SSMDASMRSSSS) are compositionally biased toward low complexity. Residues 342–397 (REWVEEDEPGVYITIRALPGGIRELRRVRFSREKFSEMHARLWWEENRARIHDQYL) form the BRX 2 domain.

It belongs to the BRX family.

It is found in the nucleus. The chain is Protein Brevis radix-like 1 (BRXL1) from Oryza sativa subsp. japonica (Rice).